We begin with the raw amino-acid sequence, 788 residues long: Glucan 1,3-beta-glucosidase (788 aa).

The N-terminal stretch at 1 to 42 (MRFSSLLACLGAVGIQAAAIPFQRRVDNTTDSGSLDAAQAAA) is a signal peptide. N28, N233, N381, and N773 each carry an N-linked (GlcNAc...) asparagine glycan.

This sequence belongs to the glycosyl hydrolase 55 family.

It carries out the reaction Successive hydrolysis of beta-D-glucose units from the non-reducing ends of (1-&gt;3)-beta-D-glucans, releasing alpha-glucose.. The sequence is that of Glucan 1,3-beta-glucosidase (EXG1) from Cochliobolus carbonum (Maize leaf spot fungus).